A 148-amino-acid chain; its full sequence is Truncated transcription factor CAULIFLOWER C (148 aa).

The MADS-box domain maps to 1–61 (MGRGRVEMKR…GKLFEYSSES (61 aa)). A K-box; partial domain is found at 90 to 148 (QTNWSMEYSRLKAKIELWERNQRHYLGEDLESISIKELQNLEQQLDTSLKHIPSRKVCK).

Homodimer capable of binding to CArG-box sequences.

The protein resides in the nucleus. Its function is as follows. Probable transcription factor that promotes early floral meristem identity in synergy with APETALA1, FRUITFULL and LEAFY. Is required subsequently for the transition of an inflorescence meristem into a floral meristem. Seems to be partially redundant to the function of APETALA1. The protein is Truncated transcription factor CAULIFLOWER C (CAL-C) of Brassica oleracea var. botrytis (Cauliflower).